Reading from the N-terminus, the 406-residue chain is Mitochondrial ribosome-associated GTPase 2 (406 aa).

The interval 15 to 406 (FQGVGHWALS…LGQGRQPLRW (392 aa)) is localized in the mitochondria. The segment at 30–406 (KPSRLLPQRA…LGQGRQPLRW (377 aa)) is not localized in the mitochondria. In terms of domain architecture, Obg spans 70 to 224 (RYFVDYRRVL…RVLHLELKTV (155 aa)). One can recognise an OBG-type G domain in the interval 225–390 (AHAGMVGFPN…LLLHLKVLYD (166 aa)). Residues 231–238 (GFPNAGKS), 256–260 (FTTLK), 278–281 (DIPG), 345–348 (NKID), and 371–373 (SAL) each bind GTP. Ser238 and Thr258 together coordinate Mg(2+).

This sequence belongs to the TRAFAC class OBG-HflX-like GTPase superfamily. OBG GTPase family. In terms of assembly, associates with the mitochondrial ribosome large subunit; the association occurs in a GTP-dependent manner. It depends on Mg(2+) as a cofactor.

It localises to the mitochondrion. Its subcellular location is the mitochondrion inner membrane. Functionally, plays a role in the regulation of the mitochondrial ribosome assembly and of translational activity. Displays GTPase activity. Involved in the ribosome maturation process. This Homo sapiens (Human) protein is Mitochondrial ribosome-associated GTPase 2 (MTG2).